Here is a 413-residue protein sequence, read N- to C-terminus: Unsaturated 3S-rhamnoglycuronyl hydrolase (413 aa).

The signal sequence occupies residues Met-1–Ala-21. Cys-22 carries N-palmitoyl cysteine lipidation. Cys-22 is lipidated: S-diacylglycerol cysteine. The active-site Proton donor is the Asp-203.

It belongs to the glycosyl hydrolase 105 family.

The protein resides in the cell membrane. In terms of biological role, glucuronyl hydrolase involved in ulvan degradation. Ulvan is the main polysaccharide component of the Ulvales (green seaweed) cell wall. It is composed of disaccharide building blocks comprising 3-sulfated rhamnose (Rha3S) linked to D-glucuronic acid (GlcA), L-iduronic acid (IduA), or D-xylose (Xyl). Unsaturated 3S-rhamnoglycuronyl hydrolase works together with ulvan lyases to fully degrade the ulvan polymer, catalyzing specifically the cleavage of the unsaturated 4-deoxy-L-threo-hex-4-enopyranosiduronic acid (deltaUA) of the deltaUA-oligosaccharides deltaUA-Rha3S, deltaUA-Rha3S-IduA-Rha3S and deltaUA-Rha3S-Xyl-Rha3S, the end products of the ulvan lyase reaction. The polypeptide is Unsaturated 3S-rhamnoglycuronyl hydrolase (Alteromonas sp. (strain LOR)).